A 410-amino-acid polypeptide reads, in one-letter code: Cysteine desulfurase IscS (410 aa).

Residues 80-81, Asn160, Gln188, and 208-210 contribute to the pyridoxal 5'-phosphate site; these read AT and SGH. Lys211 carries the N6-(pyridoxal phosphate)lysine modification. Residue Thr248 participates in pyridoxal 5'-phosphate binding. Catalysis depends on Cys334, which acts as the Cysteine persulfide intermediate. Cys334 lines the [2Fe-2S] cluster pocket.

Belongs to the class-V pyridoxal-phosphate-dependent aminotransferase family. NifS/IscS subfamily. As to quaternary structure, homodimer. Forms a heterotetramer with IscU, interacts with other sulfur acceptors. The cofactor is pyridoxal 5'-phosphate.

It localises to the cytoplasm. It carries out the reaction (sulfur carrier)-H + L-cysteine = (sulfur carrier)-SH + L-alanine. It functions in the pathway cofactor biosynthesis; iron-sulfur cluster biosynthesis. Its function is as follows. Master enzyme that delivers sulfur to a number of partners involved in Fe-S cluster assembly, tRNA modification or cofactor biosynthesis. Catalyzes the removal of elemental sulfur atoms from cysteine to produce alanine. Functions as a sulfur delivery protein for Fe-S cluster synthesis onto IscU, an Fe-S scaffold assembly protein, as well as other S acceptor proteins. This chain is Cysteine desulfurase IscS, found in Rickettsia typhi (strain ATCC VR-144 / Wilmington).